Here is a 501-residue protein sequence, read N- to C-terminus: Probable cytosol aminopeptidase (501 aa).

Mn(2+) is bound by residues Lys-268 and Asp-273. Lys-280 is an active-site residue. Mn(2+) contacts are provided by Asp-291, Asp-350, and Glu-352. The active site involves Arg-354.

Belongs to the peptidase M17 family. Mn(2+) is required as a cofactor.

It is found in the cytoplasm. The catalysed reaction is Release of an N-terminal amino acid, Xaa-|-Yaa-, in which Xaa is preferably Leu, but may be other amino acids including Pro although not Arg or Lys, and Yaa may be Pro. Amino acid amides and methyl esters are also readily hydrolyzed, but rates on arylamides are exceedingly low.. It catalyses the reaction Release of an N-terminal amino acid, preferentially leucine, but not glutamic or aspartic acids.. Functionally, presumably involved in the processing and regular turnover of intracellular proteins. Catalyzes the removal of unsubstituted N-terminal amino acids from various peptides. In Nitrosococcus oceani (strain ATCC 19707 / BCRC 17464 / JCM 30415 / NCIMB 11848 / C-107), this protein is Probable cytosol aminopeptidase.